The chain runs to 470 residues: Peripherin (470 aa).

The tract at residues 1 to 99 (MSHHPSGLRA…FLATRSNEKQ (99 aa)) is head. 3'-nitrotyrosine is present on Tyr17. Ser28, Ser50, and Ser59 each carry phosphoserine. The region spanning 97-407 (EKQELQELND…KLLEGEESRI (311 aa)) is the IF rod domain. Positions 100–132 (ELQELNDRFANFIEKVRFLEQQNAALRGELSQA) are coil 1A. The interval 133–143 (RGQEPARADQL) is linker 1. A coil 1B region spans residues 144-239 (CQQELRELRR…KLHEEELRDL (96 aa)). The tract at residues 240–262 (QVSVESQQVQQVEVEATVKPELT) is linker 2. The segment at 263–405 (AALRDIRAQY…YRKLLEGEES (143 aa)) is coil 2. At Tyr379 the chain carries 3'-nitrotyrosine. The tract at residues 406–470 (RISVPVHSFA…ELDKSSAHSY (65 aa)) is tail. Residues 447–470 (NGEVVTESQKEQRSELDKSSAHSY) are disordered. Over residues 454 to 470 (SQKEQRSELDKSSAHSY) the composition is skewed to basic and acidic residues. Tyr470 carries the phosphotyrosine modification.

The protein belongs to the intermediate filament family. In terms of assembly, forms homodimers (in vitro). Homopolymerizes into a filamentous network (in vitro). Forms heterodimers with NEFL, NEFM or NEFH (in vitro). Interacts with DST (via C-terminus). Interacts with RAB7A; the interaction is direct. Interacts with PRKCE (via phorbol-ester/DAG-type 2 domain). In terms of processing, phosphorylated; phosphorylation increases after nerve injury in regenerating neurons. In terms of tissue distribution, expressed in the neurons of the outer hair cells in the organ of Corti and to a lesser extent in type I spiral ganglion cells.

It localises to the cytoplasm. The protein localises to the cytoskeleton. It is found in the cell projection. The protein resides in the axon. Its subcellular location is the perikaryon. Functionally, class-III neuronal intermediate filament protein. May form an independent structural network without the involvement of other neurofilaments or may cooperate with the neuronal intermediate filament proteins NEFL, NEFH, NEFM and INA to form a filamentous network. Assembly of the neuronal intermediate filaments may be regulated by RAB7A. Plays a role in the development of unmyelinated sensory neurons. May be involved in axon elongation and axon regeneration after injury. Inhibits neurite extension in type II spiral ganglion neurons in the cochlea. The sequence is that of Peripherin (PRPH) from Homo sapiens (Human).